The primary structure comprises 1347 residues: Spermatogenesis-associated protein 31A7 (1347 aa).

Residues 23-43 (PWVLDIFLTLVFALGFFFLLL) form a helical membrane-spanning segment. Disordered regions lie at residues 55–88 (PSPSPGKRKCPVGRRRRPRGRMKNHSLRAGRECP), 106–233 (GPHL…RDST), 374–397 (QDTTNPKPFWNMGENSKQLPGPQK), 628–658 (DESPGTSQAKGKPSPWQSSMSTGESSKEAQK), 900–955 (RGIP…REAV), 1084–1161 (VHEE…PSVS), and 1313–1335 (KAVSPVSPPQHWPKTSGASSHHH). Residues 60 to 82 (GKRKCPVGRRRRPRGRMKNHSLR) are compositionally biased toward basic residues. Residues 165 to 178 (LASTPSPGPMTTSV) show a composition bias toward polar residues. Over residues 198 to 211 (PEPPALFPHPPHTP) the composition is skewed to pro residues. Polar residues-rich tracts occupy residues 631–651 (PGTSQAKGKPSPWQSSMSTGE) and 927–948 (LTYSLTGSIQQSRSLGAQSSKA). 2 stretches are compositionally biased toward basic and acidic residues: residues 1108-1127 (HKSEKSRKPNLEKHEERLEG) and 1137-1146 (RKTEDTHQDE).

The protein belongs to the SPATA31 family.

The protein localises to the membrane. In terms of biological role, may play a role in spermatogenesis. The chain is Spermatogenesis-associated protein 31A7 from Homo sapiens (Human).